The chain runs to 305 residues: Delta-9 acyl-lipid desaturase 1 (305 aa).

The disordered stretch occupies residues 1 to 20; it reads MSLSASEKEENNKKMAADKA. 2 consecutive transmembrane segments (helical) span residues 39 to 59 and 60 to 80; these read IVKA…PFNF and TWPA…GITV. Fe cation is bound by residues H83, H88, H120, H123, and H124. The Histidine box-1 motif lies at 83–88; it reads HRNLAH. A Histidine box-2 motif is present at residues 120–124; it reads HRYHH. A helical transmembrane segment spans residues 180 to 200; sequence VLYHILTFGFLLYYFGGLSFL. The Fe cation site is built by H223, H252, H255, and H256. A Histidine box-3 motif is present at residues 252–256; sequence HNNHH. Residues 268–288 form a helical membrane-spanning segment; it reads WWQIDISWYIVRFLEIIGLAT.

This sequence belongs to the fatty acid desaturase type 1 family. Fe cation is required as a cofactor. Strongly expressed in inflorescence meristems, leaves, and flowers, and weakly in roots and seedpods.

The protein localises to the endoplasmic reticulum membrane. It is found in the plastid. Its subcellular location is the chloroplast membrane. It functions in the pathway lipid metabolism; polyunsaturated fatty acid biosynthesis. Involved in delta-9 desaturation of fatty acids. Involved in the production of very-long-chain fatty acids (VLCFAs). May desaturate chloroplastic monogalactosyl diacylglycerol (MGDG) and alter chloroplast membrane fluidity, which is required to prime a cold acclimation response. This chain is Delta-9 acyl-lipid desaturase 1, found in Arabidopsis thaliana (Mouse-ear cress).